Here is a 344-residue protein sequence, read N- to C-terminus: uncharacterized protein (344 aa).

Residues 1-98 are Cytoplasmic-facing; sequence MIDFVKSRDT…NNDEIGIWNY (98 aa). The helical transmembrane segment at 99–119 threads the bilayer; sequence ISVAEMGGVLLFLSYWIWTCL. Position 120 (His-120) is a topological domain, lumenal. The chain crosses the membrane as a helical span at residues 121-141; that stretch reads FSKIIFPAQKVICLYIFLFAL. Over 142-169 the chain is Cytoplasmic; that stretch reads NQTLQECIEEYVFSSECIKYRQFYSVYE. A helical transmembrane segment spans residues 170–192; sequence IIDFLRTNFYRLFVIYCALGFGI. At 193–198 the chain is on the lumenal side; that stretch reads TRTVPK. The chain crosses the membrane as a helical span at residues 199-219; it reads YLMIKGISIVIALCSVYWISL. Topologically, residues 220 to 222 are cytoplasmic; the sequence is YKD. A helical transmembrane segment spans residues 223 to 243; the sequence is VYVVSEIFDMIQYEVFPAIWV. The Lumenal segment spans residues 244–273; the sequence is YSICHLLKQCTSVTTYENASKARFFRRMLN. Residues 274–294 traverse the membrane as a helical segment; that stretch reads AFIFIFCASPMLHYLSNIIFG. Residues 295–344 lie on the Cytoplasmic side of the membrane; sequence NFDYRLSVIIGDLFTFMEKIAFPCYIMFPTHNEALAYNRNVAEEAQEKMI.

The protein resides in the endoplasmic reticulum membrane. This is an uncharacterized protein from Schizosaccharomyces pombe (strain 972 / ATCC 24843) (Fission yeast).